The following is a 419-amino-acid chain: Glycine, glutamate and proline-rich protein (419 aa).

An N-terminal signal peptide occupies residues 1–16 (MKCLVALFLSLSLVAC). The tract at residues 74–152 (VERESEEAEG…VDMCAGESRR (79 aa)) is disordered. A compositionally biased stretch (acidic residues) spans 76-85 (RESEEAEGEG). A compositionally biased stretch (basic and acidic residues) spans 86–130 (TDGRGGGEGEREGWGGEREGGEGEREGGEGEREGREGEREGKSSE).

In the C-terminal section; belongs to the glycosyl hydrolase 23 family. Component of the acid-insoluble organic matrix of calcified layers of the shell (at protein level).

The protein localises to the secreted. This chain is Glycine, glutamate and proline-rich protein, found in Lottia gigantea (Giant owl limpet).